Here is a 206-residue protein sequence, read N- to C-terminus: Octanoyltransferase (206 aa).

The region spanning 30–206 is the BPL/LPL catalytic domain; that stretch reads PETNDEIWLV…EFVTLLNNSI (177 aa). Substrate contacts are provided by residues 69-76, 137-139, and 150-152; these read RGGQVTYH, SLG, and GIA. Cys168 (acyl-thioester intermediate) is an active-site residue.

It belongs to the LipB family.

Its subcellular location is the cytoplasm. The enzyme catalyses octanoyl-[ACP] + L-lysyl-[protein] = N(6)-octanoyl-L-lysyl-[protein] + holo-[ACP] + H(+). It participates in protein modification; protein lipoylation via endogenous pathway; protein N(6)-(lipoyl)lysine from octanoyl-[acyl-carrier-protein]: step 1/2. Functionally, catalyzes the transfer of endogenously produced octanoic acid from octanoyl-acyl-carrier-protein onto the lipoyl domains of lipoate-dependent enzymes. Lipoyl-ACP can also act as a substrate although octanoyl-ACP is likely to be the physiological substrate. In Francisella tularensis subsp. holarctica (strain FTNF002-00 / FTA), this protein is Octanoyltransferase.